Reading from the N-terminus, the 63-residue chain is MGSAKDKVAGKANELAGKAKKAAGDATDNNSLRAKGAAQEAKGGAQQAKGKLKDAVKGAVDKT.

Positions 1–63 (MGSAKDKVAG…DAVKGAVDKT (63 aa)) are disordered. Residues 34–49 (AKGAAQEAKGGAQQAK) are compositionally biased toward low complexity. The span at 51-63 (KLKDAVKGAVDKT) shows a compositional bias: basic and acidic residues.

This sequence belongs to the UPF0337 (CsbD) family.

This chain is UPF0337 protein RA1131, found in Rhizobium meliloti (strain 1021) (Ensifer meliloti).